The following is a 939-amino-acid chain: Trafficking kinesin-binding protein 1 (939 aa).

The region spanning 46-353 is the HAP1 N-terminal domain; that stretch reads LEEQLPHYKL…EELKNLRNKT (308 aa). Residues 106-354 are a coiled coil; that stretch reads KTYNDIDAVT…ELKNLRNKTM (249 aa). Residues 359–509 form an interaction with HGS region; it reads RYHSLGLFPM…SLRRENYLSE (151 aa). S444 carries O-linked (GlcNAc) serine glycosylation. The tract at residues 472 to 492 is disordered; the sequence is LGNEDHNKKPGTPGTPGSHDL. Residues 490–524 adopt a coiled-coil conformation; it reads HDLETALRRLSLRRENYLSERRFFEEEQERKLREL. S534 is subject to Phosphoserine. Positions 655–669 are interaction with OGT; sequence PGKCMSQTNSTFTFT. 2 O-linked (GlcNAc) serine glycosylation sites follow: S677 and S716. A phosphoserine mark is found at S716 and S905.

Belongs to the milton family. As to quaternary structure, interacts with RHOT1 and RHOT2. Found in a complex with KIF5B, OGT, RHOT1 and RHOT2. Interacts with HGS. Interacts with GABRA1. Interacts with KIF5C. Interacts with OGT; stable interaction is not required for glycosylation of this protein by OGT. Isoform 1 interacts with OGT. In terms of processing, O-glycosylated. Glycosylated by OGT; glycosylation in response to increased extracellular glucose levels is required for and leads to regulation of mitochondrial motility by OGT. As to expression, widely expressed with the greatest expression in brain, liver and kidney. Detected throughout the CNS, including the cortex, hippocamps, thalamus and various subcortical nuclei of the forebrain and midbrain, the granule of Purkinje layers of the cerebellum and the gray matter of the spinal cord. High level detected in lower moter neurons (at protein level).

The protein resides in the cytoplasm. The protein localises to the nucleus. It localises to the mitochondrion. It is found in the early endosome. Its subcellular location is the endosome. The protein resides in the mitochondrion membrane. The protein localises to the cell cortex. Involved in the regulation of endosome-to-lysosome trafficking, including endocytic trafficking of EGF-EGFR complexes and GABA-A receptors. Involved in mitochondrial motility. When O-glycosylated, abolishes mitochondrial motility. Crucial for recruiting OGT to the mitochondrial surface of neuronal processes. TRAK1 and RHOT form an essential protein complex that links KIF5 to mitochondria for light chain-independent, anterograde transport of mitochondria. This chain is Trafficking kinesin-binding protein 1 (Trak1), found in Mus musculus (Mouse).